Reading from the N-terminus, the 344-residue chain is Laforin, isoform 9 (344 aa).

Disordered regions lie at residues 1–44, 58–134, 158–188, and 320–344; these read MHPK…PGPG, GGGA…PRGH, PAPGAERELRPAPPTGASASGRPRRPRRRAS, and SLKKTQNDPTNETSVFANPRQQCAT. The segment covering 77-88 has biased composition (low complexity); sequence AARAGALGAARC. A compositionally biased stretch (gly residues) spans 101 to 131; it reads RGPGPAGAGPVARGGGAGGRGGGAGRGGAGP. Residues 179–188 show a composition bias toward basic residues; the sequence is RPRRPRRRAS.

As to quaternary structure, interacts with isoform 1 and isoform 2.

It localises to the nucleus. This chain is Laforin, isoform 9, found in Homo sapiens (Human).